Consider the following 430-residue polypeptide: MTTLTLNTSLLSSRRILAAFSGGLDSTVLLHQLVLWRERHPDVTLRAIHIHHGLSPHADSWVRHCETVCERWQVPLVVERVTLADNGLGIEAHAREARYRAFAQTLLPGEVLATAQHLDDQCETFLLALKRGSGPAGLSAMGERSPFAGTLLLRPLLRETRKTLEQWAVRHGLCWIEDESNQDDAYDRNFLRLRALPLLQQRWPHFPAAVARSATLCAEQERLLDELLASDLTDCITTEGTLRLSPLMSMSDVRRAAILRRWLAMRNAPMPSRDALERIWQEVALARDDASPCLRFGDREIRRYQSQLWWIKSVAGQHETTVAWPVWQTPLALPAGLGTVQLVPGGELRRPREEESVSIRFKAPGLLHIVGRHGGRKLKKIWQEQGIPPWRRDTTPLLFYGETLIAAAGVFVTREGAAEDKEGVSLVWHA.

An ATP-binding site is contributed by 21–26 (SGGLDS).

The protein belongs to the tRNA(Ile)-lysidine synthase family.

The protein resides in the cytoplasm. The enzyme catalyses cytidine(34) in tRNA(Ile2) + L-lysine + ATP = lysidine(34) in tRNA(Ile2) + AMP + diphosphate + H(+). Ligates lysine onto the cytidine present at position 34 of the AUA codon-specific tRNA(Ile) that contains the anticodon CAU, in an ATP-dependent manner. Cytidine is converted to lysidine, thus changing the amino acid specificity of the tRNA from methionine to isoleucine. The polypeptide is tRNA(Ile)-lysidine synthase (Salmonella agona (strain SL483)).